A 411-amino-acid polypeptide reads, in one-letter code: MNFEHISREDNEIYALIEKELERQQNGIELIASENVASEAVMEAMGSYLTNKYAEGYPGKRYYGGCYVVDGVEEIARERAKELFGAEHANVQPHSGSQANMAVYFTILEHGDTVLGMDLSHGGHLTHGSPVNFSGKLFNFVSYGVDKETEEINYDVVRELAIKHKPKLIVAGASAYSRIIDFKKFREICDEIGAYLMVDMAHIAGLVAAGLHPSPVPYADFVTSTTHKTLRGPRGGLILCKEKYAKDLDKNIFPGMQGGPLMHIIAAKAVCFKEALDPSFKEYMARVVENCKELGEQLVKRGFKLVSNGTDNHLILVDLNNKDITGKDAEKLLDEVGITLNKNTVPNETRSPFVTSGVRIGTAAITTRGFERKDMEEIADIINETIINRDKDLEKYKQRVKALCEKYPLYK.

(6S)-5,6,7,8-tetrahydrofolate is bound by residues L119 and 123-125 (GHL). K228 carries the post-translational modification N6-(pyridoxal phosphate)lysine. 351–353 (SPF) contributes to the (6S)-5,6,7,8-tetrahydrofolate binding site.

This sequence belongs to the SHMT family. In terms of assembly, homodimer. Pyridoxal 5'-phosphate serves as cofactor.

It is found in the cytoplasm. The catalysed reaction is (6R)-5,10-methylene-5,6,7,8-tetrahydrofolate + glycine + H2O = (6S)-5,6,7,8-tetrahydrofolate + L-serine. Its pathway is one-carbon metabolism; tetrahydrofolate interconversion. The protein operates within amino-acid biosynthesis; glycine biosynthesis; glycine from L-serine: step 1/1. Its function is as follows. Catalyzes the reversible interconversion of serine and glycine with tetrahydrofolate (THF) serving as the one-carbon carrier. This reaction serves as the major source of one-carbon groups required for the biosynthesis of purines, thymidylate, methionine, and other important biomolecules. Also exhibits THF-independent aldolase activity toward beta-hydroxyamino acids, producing glycine and aldehydes, via a retro-aldol mechanism. The sequence is that of Serine hydroxymethyltransferase from Clostridium botulinum (strain Alaska E43 / Type E3).